The chain runs to 2925 residues: TPR and ankyrin repeat-containing protein 1 (2925 aa).

2 TPR repeats span residues 15-48 and 50-82; these read AVLL…DPTY and KGYY…VQRS. 6 ANK repeats span residues 168–198, 203–232, 240–276, 463–492, 497–518, and 546–575; these read EKYV…SVET, PLHA…EWKG, DGCT…DPTL, SQER…DPRA, EGDT…DIGF, and NGNT…KFDI. Disordered regions lie at residues 612 to 669, 706 to 741, and 1077 to 1103; these read SRQD…LPGT, PEDC…DCSE, and VEPG…SIEV. The segment covering 624-641 has biased composition (polar residues); that stretch reads SKSTAPGHTSQLKSQGSF. A compositionally biased stretch (basic and acidic residues) spans 720 to 730; the sequence is AGKEGKKDDKP. Residues 1085–1103 are compositionally biased toward acidic residues; sequence GGEEEEEEEDEEEEDSIEV. 2 TPR repeats span residues 1699–1732 and 1793–1826; these read PAEW…EKEK and LGKI…DLAL. Positions 2301–2330 form a coiled coil; sequence EEFEKLLHQEEDNYNRELKALESEKDERGR.

The sequence is that of TPR and ankyrin repeat-containing protein 1 (TRANK1) from Homo sapiens (Human).